Reading from the N-terminus, the 268-residue chain is Glutamate racemase (268 aa).

Residues 13 to 14 (DS) and 45 to 46 (YG) each bind substrate. C77 (proton donor/acceptor) is an active-site residue. 78–79 (NT) is a substrate binding site. C185 acts as the Proton donor/acceptor in catalysis. Substrate is bound at residue 186-187 (TH).

The protein belongs to the aspartate/glutamate racemases family.

It carries out the reaction L-glutamate = D-glutamate. It participates in cell wall biogenesis; peptidoglycan biosynthesis. Provides the (R)-glutamate required for cell wall biosynthesis. The polypeptide is Glutamate racemase (Vibrio campbellii (strain ATCC BAA-1116)).